The following is a 407-amino-acid chain: Multifunctional CCA protein (407 aa).

Glycine 8 and arginine 11 together coordinate ATP. Glycine 8 and arginine 11 together coordinate CTP. Aspartate 21 and aspartate 23 together coordinate Mg(2+). 3 residues coordinate ATP: arginine 91, arginine 137, and arginine 140. Arginine 91, arginine 137, and arginine 140 together coordinate CTP. The HD domain occupies 228 to 329; that stretch reads TGMHTLMVSQ…IKIFDKMDLW (102 aa).

Belongs to the tRNA nucleotidyltransferase/poly(A) polymerase family. Bacterial CCA-adding enzyme type 1 subfamily. In terms of assembly, monomer. Can also form homodimers and oligomers. Mg(2+) serves as cofactor. It depends on Ni(2+) as a cofactor.

The catalysed reaction is a tRNA precursor + 2 CTP + ATP = a tRNA with a 3' CCA end + 3 diphosphate. The enzyme catalyses a tRNA with a 3' CCA end + 2 CTP + ATP = a tRNA with a 3' CCACCA end + 3 diphosphate. Its function is as follows. Catalyzes the addition and repair of the essential 3'-terminal CCA sequence in tRNAs without using a nucleic acid template. Adds these three nucleotides in the order of C, C, and A to the tRNA nucleotide-73, using CTP and ATP as substrates and producing inorganic pyrophosphate. tRNA 3'-terminal CCA addition is required both for tRNA processing and repair. Also involved in tRNA surveillance by mediating tandem CCA addition to generate a CCACCA at the 3' terminus of unstable tRNAs. While stable tRNAs receive only 3'-terminal CCA, unstable tRNAs are marked with CCACCA and rapidly degraded. This chain is Multifunctional CCA protein, found in Aliivibrio salmonicida (strain LFI1238) (Vibrio salmonicida (strain LFI1238)).